Consider the following 440-residue polypeptide: MSYFEHIPAIRYEGPQSDNPLAYHHYDRTKRVLGKTLEEHLRIAVCYWHTFVWPGHDIFGQGAFRRPWQQPGDALERARQKADAAFEFFTKLGTPFYTFHDTDVAPEGDSLREYVDNFARMVDYLGERQQASGVRLLWGTANLFSHPRFAAGAATNPNPDVFAWAATQVRHALDATHRLGGENYVLWGGREGYETLLNTDLKREREQFARFLSMVVEHKHRIGFRGALLIEPKPQEPTKHQYDYDVATVHGFLTQYGLQDEIRVNIEANHATLAGHSFHHEIANAFALGVFGSVDANRGDPQNGWDTDQFPNSVEELTLAFYEILRHGGFTTGGMNFDAKVRRQSVDPEDLFYGHVGAIDVLALALERAAVLVENDRLEAMRRQRYAQWDDAFGRKILSGGYTLESLAADALARGVNPQHASGAQERLENIVNQAIYALR.

Residues His-100 and Asp-103 contribute to the active site. The Mg(2+) site is built by Glu-231, Glu-267, His-270, Asp-295, Asp-306, Asp-308, and Asp-338.

The protein belongs to the xylose isomerase family. As to quaternary structure, homotetramer. It depends on Mg(2+) as a cofactor.

The protein resides in the cytoplasm. The catalysed reaction is alpha-D-xylose = alpha-D-xylulofuranose. This chain is Xylose isomerase, found in Burkholderia multivorans (strain ATCC 17616 / 249).